A 296-amino-acid chain; its full sequence is MFCEFAIIGTTASGKSALALQIAQEFSGVILSLDSLALYKQIDIASAKPSRKELASVKHFGVDEIYPNENFSVGMFFKIYERAKDYALNADCPLIITGGSGFYLRSMLSGLAPDVPKCDKALSNDEIYALAARIDPEFCAKFSPNDSYRLEKWYQIYKFSGAVPSTWLRENTSEPVIKELAIFEILWSAQAIRERIQRRTQAMFEAGLLEEAKFLFDTYGRELKPLRSIGLKECADFFDAKISREELASLICTHTAQLAKRQRTFNRSQFSKIFIGEPDAAREKIKGFLKNQAKRP.

9-16 (GTTASGKS) lines the ATP pocket. 11–16 (TASGKS) is a substrate binding site. The interval 34-37 (DSLA) is interaction with substrate tRNA.

This sequence belongs to the IPP transferase family. As to quaternary structure, monomer. It depends on Mg(2+) as a cofactor.

It carries out the reaction adenosine(37) in tRNA + dimethylallyl diphosphate = N(6)-dimethylallyladenosine(37) in tRNA + diphosphate. Functionally, catalyzes the transfer of a dimethylallyl group onto the adenine at position 37 in tRNAs that read codons beginning with uridine, leading to the formation of N6-(dimethylallyl)adenosine (i(6)A). The sequence is that of tRNA dimethylallyltransferase from Campylobacter curvus (strain 525.92).